A 105-amino-acid polypeptide reads, in one-letter code: Fluoride-specific ion channel FluC (105 aa).

A run of 3 helical transmembrane segments spans residues 14-34 (FPLPILTVNVLGSFLMGVFVV), 44-64 (LSPLVMTGLLGGFTTFSAFSL), and 79-99 (ALYVALSVGLSIAGLMAGLWL). The Na(+) site is built by Gly54 and Thr57.

The protein belongs to the fluoride channel Fluc/FEX (TC 1.A.43) family.

The protein localises to the cell inner membrane. The enzyme catalyses fluoride(in) = fluoride(out). Its activity is regulated as follows. Na(+) is not transported, but it plays an essential structural role and its presence is essential for fluoride channel function. In terms of biological role, fluoride-specific ion channel. Important for reducing fluoride concentration in the cell, thus reducing its toxicity. The chain is Fluoride-specific ion channel FluC from Jannaschia sp. (strain CCS1).